Reading from the N-terminus, the 129-residue chain is C-phycocyanin beta subunit (129 aa).

Position 62 is an N4-methylasparagine (Asn-62). Cys-116 lines the (2R,3E)-phycocyanobilin pocket.

The protein belongs to the phycobiliprotein family. Heterodimer of an alpha and a beta subunit, which further assembles into trimers and the trimers into hexamers. In terms of processing, two isomers exist. Post-translationally, contains two covalently linked bilin chromophores.

It localises to the cellular thylakoid membrane. In terms of biological role, light-harvesting photosynthetic bile pigment-protein from the phycobiliprotein complex (phycobilisome, PBS). Phycocyanin is the major phycobiliprotein in the PBS rod. The protein is C-phycocyanin beta subunit of Aphanizomenon flos-aquae.